A 97-amino-acid polypeptide reads, in one-letter code: uncharacterized protein (97 aa).

To B.licheniformis xpaL1 and to B.subtilis XhlA.

This is an uncharacterized protein from Bacillus licheniformis.